Here is a 392-residue protein sequence, read N- to C-terminus: WD repeat-containing protein GTS1 (392 aa).

WD repeat units follow at residues 81–124 (GHSD…QVSR), 128–167 (GNDQEIFSFSYGGAADNLLAGGCKEQVLLWDWRNSKQVAC), 171–211 (SHMD…NDDD), and 323–368 (GHID…TEIN).

In terms of tissue distribution, expressed in germinating seeds, rosettes leaves, flowers and siliques.

Its function is as follows. Involved in the control of plant growth development. Acts as negative regulator of seed germination, cell division in meristematic regions, plant growth and overall biomass accumulation. May function by regulating ribosome activities and biogenesis in plant cells. The polypeptide is WD repeat-containing protein GTS1 (Arabidopsis thaliana (Mouse-ear cress)).